The sequence spans 119 residues: HTH-type transcriptional regulator SarX (119 aa).

A DNA-binding region (H-T-H motif) is located at residues 55 to 78 (LKTAMDELDLSRTKLLVSIRRLIE).

Belongs to the SarA family.

The protein resides in the cytoplasm. Its function is as follows. Involved in the regulation of virulence genes. Acts as a repressor of the agr locus and consequently targets genes regulated by the agr system such as sspA, hla and hlb. Binds directly to the agr promoter region. The protein is HTH-type transcriptional regulator SarX (sarX) of Staphylococcus aureus (strain bovine RF122 / ET3-1).